Consider the following 332-residue polypeptide: Long form salivary protein D7L2 (332 aa).

The first 21 residues, 1 to 21, serve as a signal peptide directing secretion; it reads MFPPRKFLLSSFILAALHVTA. 2 disulfides stabilise this stretch: cysteine 40/cysteine 77 and cysteine 73/cysteine 133. Tryptophan 61 contributes to the leukotriene E4 binding site. Residues glycine 157 and lysine 176 each coordinate leukotriene E4. 3 disulfide bridges follow: cysteine 184-cysteine 219, cysteine 200-cysteine 331, and cysteine 259-cysteine 278. 3 residues coordinate noradrenaline: glutamate 185, arginine 203, and histidine 216. The noradrenaline site is built by aspartate 294 and glutamate 297.

This sequence belongs to the PBP/GOBP family. As to quaternary structure, interacts with human CD4. In terms of tissue distribution, saliva (at protein level). Female salivary gland (at protein level). Detected in the head and thorax of the female mosquitoes, where the salivary glands are located.

It localises to the secreted. Functionally, modulates blood feeding of female mosquitoes on vertebrate species by binding and sequestering different mediators involved in the host response, such as biogenic amines and eicosanoids. Binds serotonin, histamine, tryptamine, noradrenaline, leukotriene B4, leukotriene C4, leukotriene D4, leukotriene E4 and U-46619, a stable analog of thromboxane A2. Does not bind adrenaline. Exhibits vasodilating activity. Inhibits agonist-induced platelet aggregation but not blood clotting. In terms of biological role, (Microbial infection) Probably promotes Plasmodium gallinaceum oocyst development in mosquito midgut. This Aedes aegypti (Yellowfever mosquito) protein is Long form salivary protein D7L2.